Reading from the N-terminus, the 582-residue chain is ABC transporter-like protein ECU11_1340 (582 aa).

Residues 15–257 (VPNQNLSSNE…LGTKGIHNDG (243 aa)) enclose the ABC transporter domain. Position 47–54 (47–54 (GTSGSGKT)) interacts with ATP. The region spanning 316 to 519 (YVSFQMAIRQ…EIDAFISNFF (204 aa)) is the ABC transmembrane type-2 domain. Transmembrane regions (helical) follow at residues 335–355 (ILYS…GKYI), 359–378 (FSIA…YVMN), 412–432 (TLVS…FGLI), 436–456 (HAFL…SMLF), 482–502 (GALL…SVIP), and 551–571 (SFLR…SSIL).

It belongs to the ABC transporter superfamily.

It is found in the membrane. This chain is ABC transporter-like protein ECU11_1340, found in Encephalitozoon cuniculi (strain GB-M1) (Microsporidian parasite).